A 750-amino-acid chain; its full sequence is Eukaryotic translation initiation factor 3 subunit B (750 aa).

Residues 42 to 128 (TFVVVDGLPE…HTLRVNKMTD (87 aa)) enclose the RRM domain. 4 WD repeats span residues 195–234 (DRQQ…RLRR), 236–292 (PHPF…PLRS), 309–348 (SAKF…LMDK), and 519–562 (LDKK…EKPE).

It belongs to the eIF-3 subunit B family. As to quaternary structure, component of the eukaryotic translation initiation factor 3 (eIF-3) complex.

The protein localises to the cytoplasm. Functionally, RNA-binding component of the eukaryotic translation initiation factor 3 (eIF-3) complex, which is involved in protein synthesis of a specialized repertoire of mRNAs and, together with other initiation factors, stimulates binding of mRNA and methionyl-tRNAi to the 40S ribosome. The eIF-3 complex specifically targets and initiates translation of a subset of mRNAs involved in cell proliferation. In Chaetomium globosum (strain ATCC 6205 / CBS 148.51 / DSM 1962 / NBRC 6347 / NRRL 1970) (Soil fungus), this protein is Eukaryotic translation initiation factor 3 subunit B.